Here is a 495-residue protein sequence, read N- to C-terminus: Ribitol 5-phosphate transferase FKRP (495 aa).

Over 1–6 the chain is Cytoplasmic; that stretch reads MRLTRC. The chain crosses the membrane as a helical span at residues 7 to 29; it reads QAALAAAITLNLLVLFYVSWLQH. The Lumenal portion of the chain corresponds to 30–495; sequence QPRNSRARGP…PALLSLTGSG (466 aa). Cys-168 and Cys-191 are disulfide-bonded. Residues Asn-172 and Asn-209 are each glycosylated (N-linked (GlcNAc...) asparagine). Residues Cys-289, Cys-296, Cys-317, and Cys-318 each coordinate Zn(2+). The zinc finger loop stretch occupies residues 289-318; the sequence is CNKETTRCFGTVVGDTPAYLYEERWTPPCC. CDP-L-ribitol-binding positions include Gly-345, Arg-352, 359 to 364, 437 to 438, and 480 to 482; these read WDYDVD, QD, and NPQ. Residues Asp-360, Asp-362, and Asp-364 each contribute to the Mg(2+) site.

This sequence belongs to the LicD transferase family. In terms of assembly, homodimer; disulfide-linked. Tetramer. Forms a complex composed of FKRP, FKTN/fukutin, and RXYLT1/TMEM5. Also exists as large multimeric protein complexes. May interact with the dystrophin-glycoprotein complex (DGC). It depends on Mg(2+) as a cofactor. Post-translationally, N-glycosylated. As to expression, expressed in the retina (at protein level). Expressed predominantly in skeletal muscle, placenta, and heart and relatively weakly in brain, lung, liver, kidney, and pancreas.

The protein localises to the golgi apparatus membrane. The protein resides in the secreted. Its subcellular location is the cell membrane. It localises to the sarcolemma. It is found in the rough endoplasmic reticulum. The protein localises to the cytoplasm. The enzyme catalyses 3-O-[Rib-ol-P-3-beta-D-GalNAc-(1-&gt;3)-beta-D-GlcNAc-(1-&gt;4)-(O-6-P-alpha-D-Man)]-Thr-[protein] + CDP-L-ribitol = 3-O-[Rib-ol-P-Rib-ol-P-3-beta-D-GalNAc-(1-&gt;3)-beta-D-GlcNAc-(1-&gt;4)-(O-6-P-alpha-D-Man)]-Thr-[protein] + CMP + H(+). It functions in the pathway protein modification; protein glycosylation. Its function is as follows. Catalyzes the transfer of a ribitol 5-phosphate from CDP-L-ribitol to the ribitol 5-phosphate previously attached by FKTN/fukutin to the phosphorylated O-mannosyl trisaccharide (N-acetylgalactosamine-beta-3-N-acetylglucosamine-beta-4-(phosphate-6-)mannose), a carbohydrate structure present in alpha-dystroglycan (DAG1). This constitutes the second step in the formation of the ribose 5-phosphate tandem repeat which links the phosphorylated O-mannosyl trisaccharide to the ligand binding moiety composed of repeats of 3-xylosyl-alpha-1,3-glucuronic acid-beta-1. This is Ribitol 5-phosphate transferase FKRP from Homo sapiens (Human).